A 2363-amino-acid chain; its full sequence is Spectrin beta chain, non-erythrocytic 1 (2363 aa).

Position 2 is an N-acetylthreonine (Thr2). Positions 2-275 are actin-binding; it reads TTTVATDYDN…IITYVVTYYH (274 aa). A phosphoserine mark is found at Ile14 and Ser36. Calponin-homology (CH) domains lie at 54 to 158 and 173 to 278; these read AVQK…LRFQ and KSAK…HYFS. The residue at position 90 (Lys90) is an N6-acetyllysine. Ser228 carries the phosphoserine modification. Spectrin repeat units follow at residues 303–411, 423–525, 530–636, 639–742, 745–847, 850–952, 957–1060, 1063–1166, 1170–1259, 1276–1376, 1381–1482, 1486–1590, 1592–1696, 1698–1801, and 1805–1907; these read MIEK…LALR, LARR…QRLE, LQKI…RLEE, RLWK…RLEE, LLHQ…ALQD, ALYK…DALL, IQNY…SLGE, KLQQ…NLLS, AYQQ…RHRK, DLQK…AQRL, KAEL…HNLL, EIHQ…RLEE, HKAQ…KLDE, HRLF…TQIL, and YELH…RVRL. Phosphoserine is present on residues Ser817, Ser903, Ser1057, Ser1076, Ser1079, and Ser1237. Ser1388, Ser1447, and Ser1557 each carry phosphoserine. An interaction with ANK2 region spans residues 1563–2093; sequence IRQRLADLKQ…LLEVRRQQEE (531 aa). Tyr1805 carries the post-translational modification Phosphotyrosine. N6-acetyllysine is present on residues Lys1815, Lys1913, and Lys1989. Spectrin repeat units lie at residues 1914 to 2014 and 2018 to 2097; these read FRFF…EWLR and EVHQ…EERK. The segment at 2089–2193 is disordered; that stretch reads RQQEEEERKR…AATLPARTLE (105 aa). Residues Ser2102, Ser2127, and Ser2137 each carry the phosphoserine modification. Residues 2115 to 2130 show a composition bias toward polar residues; the sequence is SQQWDTSKGDQVSQNG. Residue Thr2146 is modified to Phosphothreonine. Ser2147 bears the Phosphoserine mark. The interval 2148–2176 is mediates interaction with CAMSAP1; that stretch reads EMVNGAAEQRTSSKESSPVPSPTLDRKAK. Thr2158 carries the post-translational modification Phosphothreonine. Residues Ser2159, Ser2160, Ser2163, Ser2164, and Ser2168 each carry the phosphoserine modification. Position 2170 is a phosphothreonine (Thr2170). Ser2183 bears the Phosphoserine mark. Phosphothreonine is present on residues Thr2186 and Thr2194. Residues 2196–2306 form the PH domain; it reads AAQMEGFLNR…WIQAISSAIS (111 aa). The interval 2308-2363 is disordered; it reads DKHDTSASTQSTPASSRAQTLPTSVVTITSESSPGKREKDKEKDKEKRFSLFGKKK. Ser2313 and Ser2318 each carry phosphoserine. Residues 2313 to 2327 show a composition bias toward low complexity; sequence SASTQSTPASSRAQT. Residue Thr2319 is modified to Phosphothreonine. Ser2323 carries O-linked (GlcNAc) serine glycosylation. Thr2327 is modified (phosphothreonine). Positions 2328–2340 are enriched in polar residues; the sequence is LPTSVVTITSESS. Phosphoserine occurs at positions 2339 and 2340. The segment covering 2341-2356 has biased composition (basic and acidic residues); the sequence is PGKREKDKEKDKEKRF.

It belongs to the spectrin family. Interacts with ANK2. Interacts with CPNE4 (via VWFA domain). Like erythrocyte spectrin, the spectrin-like proteins are capable to form dimers which can further associate to tetramers. Interacts with CAMSAP1. Can form heterodimers with SPTAN1. Isoform 2 is present in brain, heart, kidney and liver (at protein level).

The protein localises to the cytoplasm. It localises to the cytoskeleton. It is found in the endomembrane system. The protein resides in the myofibril. Its subcellular location is the sarcomere. The protein localises to the m line. It localises to the cytosol. It is found in the cell membrane. Its function is as follows. Fodrin, which seems to be involved in secretion, interacts with calmodulin in a calcium-dependent manner and is thus candidate for the calcium-dependent movement of the cytoskeleton at the membrane. Plays a critical role in central nervous system development and function. The protein is Spectrin beta chain, non-erythrocytic 1 (Sptbn1) of Mus musculus (Mouse).